A 355-amino-acid chain; its full sequence is dTDP-glucose 4,6-dehydratase (355 aa).

NAD(+)-binding positions include 12–13 (FI), 33–36 (DKLT), 59–60 (DI), 81–85 (LAAES), and Thr100. Ser85 lines the substrate pocket. Position 134 (Thr134) interacts with substrate. Asp135 functions as the Proton donor in the catalytic mechanism. Catalysis depends on proton acceptor residues Glu136 and Tyr160. Position 160-164 (160-164 (YSASK)) interacts with NAD(+). A substrate-binding site is contributed by Asn189. Asn190 is an NAD(+) binding site. Residues 199–200 (KL), 215–217 (PVY), Arg224, Asn259, and 293–297 (DRPGH) contribute to the substrate site.

It belongs to the NAD(P)-dependent epimerase/dehydratase family. dTDP-glucose dehydratase subfamily. In terms of assembly, homodimer. NAD(+) serves as cofactor.

It carries out the reaction dTDP-alpha-D-glucose = dTDP-4-dehydro-6-deoxy-alpha-D-glucose + H2O. Its pathway is carbohydrate biosynthesis; dTDP-L-rhamnose biosynthesis. It participates in bacterial outer membrane biogenesis; LPS O-antigen biosynthesis. In terms of biological role, catalyzes the dehydration of dTDP-D-glucose to form dTDP-6-deoxy-D-xylo-4-hexulose via a three-step process involving oxidation, dehydration and reduction. The protein is dTDP-glucose 4,6-dehydratase (rfbB1) of Neisseria meningitidis serogroup B (strain ATCC BAA-335 / MC58).